Here is an 84-residue protein sequence, read N- to C-terminus: Large ribosomal subunit protein bL27 (84 aa).

Residues 1–24 are disordered; that stretch reads MAHKKAGGSSRNGRDSKGQRLGCK.

Belongs to the bacterial ribosomal protein bL27 family.

The sequence is that of Large ribosomal subunit protein bL27 from Pelobacter propionicus (strain DSM 2379 / NBRC 103807 / OttBd1).